The following is a 331-amino-acid chain: Major outer membrane protein P.IB (331 aa).

Residues 1 to 19 (MKKSLIALTLAALPVAAMA) form the signal peptide.

This sequence belongs to the Gram-negative porin family. Homotrimer.

The protein resides in the cell outer membrane. Its function is as follows. Serves as a slightly cation selective porin. The chain is Major outer membrane protein P.IB (porB) from Neisseria meningitidis serogroup B.